A 129-amino-acid chain; its full sequence is Large ribosomal subunit protein bL21 (129 aa).

The interval 100–129 (DGAKPSKKAAEKKAPKAAPKKAAAKAESAE) is disordered.

It belongs to the bacterial ribosomal protein bL21 family. As to quaternary structure, part of the 50S ribosomal subunit. Contacts protein L20.

Functionally, this protein binds to 23S rRNA in the presence of protein L20. The polypeptide is Large ribosomal subunit protein bL21 (Brucella anthropi (strain ATCC 49188 / DSM 6882 / CCUG 24695 / JCM 21032 / LMG 3331 / NBRC 15819 / NCTC 12168 / Alc 37) (Ochrobactrum anthropi)).